A 610-amino-acid chain; its full sequence is Chaperone protein DnaK (610 aa).

At Thr173 the chain carries Phosphothreonine; by autocatalysis. Residues 579-592 (QQQQAQGANAGQNN) show a composition bias toward low complexity. The interval 579–610 (QQQQAQGANAGQNNDSTVEDAEFKEVKDDDKK) is disordered. The segment covering 599 to 610 (AEFKEVKDDDKK) has biased composition (basic and acidic residues).

Belongs to the heat shock protein 70 family.

Acts as a chaperone. The protein is Chaperone protein DnaK of Staphylococcus aureus (strain bovine RF122 / ET3-1).